The sequence spans 134 residues: Small ribosomal subunit protein uS8c (134 aa).

Belongs to the universal ribosomal protein uS8 family. Part of the 30S ribosomal subunit.

The protein resides in the plastid. It is found in the chloroplast. One of the primary rRNA binding proteins, it binds directly to 16S rRNA central domain where it helps coordinate assembly of the platform of the 30S subunit. The protein is Small ribosomal subunit protein uS8c (rps8) of Pelargonium hortorum (Common geranium).